A 555-amino-acid chain; its full sequence is MDIKRTVLWVIFFMSAVMLYDNWQRSHGRPSMFFPSATQTAPAAAAGGASGTGATTTTAGEVPAAAAGAAPSTTAPAAQAQLVKFSTDVYDGEIDTRGGTLAKLTLKKQGDGKQPDLYITLFDHTAGHTYLARSGLLGGDFPNHNDVYTQLNPGTTSLTGDQNALKLSFESPVKGGVKVVKTYTFTRGSYVIGVDTKIDNVGTAPVTPTVYMELVRDNTAVETPMFSHTFLGPAVYTDAKHFQKINFSDLDKNKADYVTSADNGWVAMVQHYFASAWIPQQGVKRDIYAEKIDPTLYRVGVKQPVAAIAPGQSADVQARLFAGPEEERMLEGIAPGLELVKDYGWVTIIAKPLFWLLEKIHSYIGNWGWSIVLLTLLIKAVFFPLSAASYKSMARMKEITPRMQALRERFKSDPQKMNSALMELYKTEKVNPFGGCLPVVIQIPVFISLYWVLLASVEMRGAPWVLWIHDLSQRDPFFILPVLMAVSMYVQTSLNPTPPDPVQAKMMKFMPIAFSVMFFFFPAGLVLYYVVNNVLSIAQQYYITRKLGGAKKKPA.

Transmembrane regions (helical) follow at residues 7 to 24 (VLWV…DNWQ), 367 to 387 (WGWS…PLSA), 437 to 457 (LPVV…LASV), 476 to 496 (PFFI…SLNP), and 511 to 531 (PIAF…YYVV).

This sequence belongs to the OXA1/ALB3/YidC family. Type 1 subfamily. In terms of assembly, interacts with the Sec translocase complex via SecD. Specifically interacts with transmembrane segments of nascent integral membrane proteins during membrane integration.

It is found in the cell inner membrane. In terms of biological role, required for the insertion and/or proper folding and/or complex formation of integral membrane proteins into the membrane. Involved in integration of membrane proteins that insert both dependently and independently of the Sec translocase complex, as well as at least some lipoproteins. Aids folding of multispanning membrane proteins. This chain is Membrane protein insertase YidC, found in Burkholderia lata (strain ATCC 17760 / DSM 23089 / LMG 22485 / NCIMB 9086 / R18194 / 383).